The sequence spans 617 residues: Elongation factor 4 (617 aa).

Residues Ala-17 to Val-198 enclose the tr-type G domain. Residues Asp-29–Thr-34 and Asn-145–Asp-148 each bind GTP.

Belongs to the TRAFAC class translation factor GTPase superfamily. Classic translation factor GTPase family. LepA subfamily.

The protein resides in the cell membrane. It carries out the reaction GTP + H2O = GDP + phosphate + H(+). Required for accurate and efficient protein synthesis under certain stress conditions. May act as a fidelity factor of the translation reaction, by catalyzing a one-codon backward translocation of tRNAs on improperly translocated ribosomes. Back-translocation proceeds from a post-translocation (POST) complex to a pre-translocation (PRE) complex, thus giving elongation factor G a second chance to translocate the tRNAs correctly. Binds to ribosomes in a GTP-dependent manner. The polypeptide is Elongation factor 4 (Paenarthrobacter aurescens (strain TC1)).